Consider the following 503-residue polypeptide: Annexin A11 (503 aa).

Pro residues-rich tracts occupy residues 1 to 17, 80 to 145, and 155 to 169; these read MSYP…PPAP, GYPP…PYPG, and SPVP…PSYP. Disordered stretches follow at residues 1-35 and 56-178; these read MSYP…MPPI and AANM…GTVT. Annexin repeat units follow at residues 198–269, 270–341, 353–425, and 429–500; these read FDPL…ALMK, TPIL…SLSQ, SLVQ…AVVK, and NTPA…KICG. 2 positions are modified to N6-acetyllysine: Lys246 and Lys253. Residue Lys477 is modified to N6-acetyllysine.

The protein belongs to the annexin family. Interacts with PDCD6 in a calcium-dependent manner. Interacts with KIF23 during cytokinesis. Interacts with S100A6.

The protein localises to the cytoplasm. It localises to the melanosome. The protein resides in the nucleus envelope. It is found in the nucleus. Its subcellular location is the nucleoplasm. The protein localises to the cytoskeleton. It localises to the spindle. In terms of biological role, required for midbody formation and completion of the terminal phase of cytokinesis. Binds specifically to calcyclin in a calcium-dependent manner. The sequence is that of Annexin A11 (ANXA11) from Oryctolagus cuniculus (Rabbit).